A 624-amino-acid chain; its full sequence is Phosphomethylpyrimidine synthase (624 aa).

Substrate contacts are provided by residues Asn-231, Met-260, Tyr-289, His-325, 345–347, 386–389, and Glu-425; these read SRG and DGLR. His-429 contributes to the Zn(2+) binding site. Tyr-452 serves as a coordination point for substrate. His-493 provides a ligand contact to Zn(2+). Residues Cys-573, Cys-576, and Cys-581 each coordinate [4Fe-4S] cluster.

It belongs to the ThiC family. In terms of assembly, homodimer. It depends on [4Fe-4S] cluster as a cofactor.

The catalysed reaction is 5-amino-1-(5-phospho-beta-D-ribosyl)imidazole + S-adenosyl-L-methionine = 4-amino-2-methyl-5-(phosphooxymethyl)pyrimidine + CO + 5'-deoxyadenosine + formate + L-methionine + 3 H(+). Its pathway is cofactor biosynthesis; thiamine diphosphate biosynthesis. Functionally, catalyzes the synthesis of the hydroxymethylpyrimidine phosphate (HMP-P) moiety of thiamine from aminoimidazole ribotide (AIR) in a radical S-adenosyl-L-methionine (SAM)-dependent reaction. This is Phosphomethylpyrimidine synthase from Myxococcus xanthus (strain DK1622).